The chain runs to 139 residues: Angiogenin (139 aa).

A signal peptide spans 1–21 (MAMSSLWWTAILLLALTVSMC). Histidine 34 (proton acceptor) is an active-site residue. Intrachain disulfides connect cysteine 49–cysteine 102, cysteine 64–cysteine 111, and cysteine 82–cysteine 126. TRNA contacts are provided by cysteine 102 and valine 122. Histidine 133 acts as the Proton donor in catalysis.

This sequence belongs to the pancreatic ribonuclease family. In terms of assembly, homodimer. Interacts with RNH1; inhibiting ANG ribonuclease activity.

The protein resides in the secreted. It localises to the nucleus. It is found in the nucleolus. The protein localises to the cytoplasm. Its subcellular location is the stress granule. In terms of biological role, secreted ribonuclease that can either promote or restrict cell proliferation of target cells, depending on the context. Endocytosed in target cells via its receptor PLXNB2 and translocates to the cytoplasm or nucleus. Under stress conditions, localizes to the cytoplasm and promotes the assembly of stress granules (SGs): specifically cleaves a subset of tRNAs within anticodon loops to produce tRNA-derived stress-induced fragments (tiRNAs), resulting in translation repression and inhibition of cell proliferation. tiRNas also prevent formation of apoptosome, thereby promoting cell survival. Preferentially cleaves RNAs between a pyrimidine and an adenosine residue, suggesting that it cleaves the anticodon loop of tRNA(Ala) (32-UUAGCAU-38) after positions 33 and 36. Cleaves a subset of tRNAs, including tRNA(Ala), tRNA(Glu), tRNA(Gly), tRNA(Lys), tRNA(Val), tRNA(His), tRNA(Asp) and tRNA(Sec). Under growth conditions and in differentiated cells, translocates to the nucleus and stimulates ribosomal RNA (rRNA) transcription, including that containing the initiation site sequences of 45S rRNA, thereby promoting cell growth and proliferation. Angiogenin induces vascularization of normal and malignant tissues via its ability to promote rRNA transcription. This is Angiogenin (ANG) from Gallus gallus (Chicken).